A 340-amino-acid polypeptide reads, in one-letter code: Fructose-1,6-bisphosphatase class 1 (340 aa).

Residues E107, D126, L128, and D129 each coordinate Mg(2+). Residue N215 participates in substrate binding. Position 287 (E287) interacts with Mg(2+).

The protein belongs to the FBPase class 1 family. As to quaternary structure, homotetramer. Requires Mg(2+) as cofactor.

The protein resides in the cytoplasm. The enzyme catalyses beta-D-fructose 1,6-bisphosphate + H2O = beta-D-fructose 6-phosphate + phosphate. It participates in carbohydrate biosynthesis; gluconeogenesis. The polypeptide is Fructose-1,6-bisphosphatase class 1 (Brucella ovis (strain ATCC 25840 / 63/290 / NCTC 10512)).